The sequence spans 273 residues: MNNRVHQGHLARKRFGQNFLNDQFVIDSIVSAINPQKGQAMVEIGPGLAALTEPVGERLDQLTVIELDRDLAARLQTHPFLGPKLTIYQQDAMTFNFGELAEKMGQPLRVFGNLPYNISTPLMFHLFSYTDAIADMHFMLQKEVVNRLVAGPNSKAYGRLSVMAQYYCNVIPVLEVPPSAFTPPPKVDSAVVRLVPHATMPHPVKDVRVLSRITTEAFNQRRKTIRNSLGNLFSVEVLTGMGIDPAMRAENISVAQYCQMANYLAENAPLQES.

The S-adenosyl-L-methionine site is built by Asn18, Leu20, Gly45, Glu66, Asp91, and Asn113.

The protein belongs to the class I-like SAM-binding methyltransferase superfamily. rRNA adenine N(6)-methyltransferase family. RsmA subfamily.

The protein resides in the cytoplasm. It carries out the reaction adenosine(1518)/adenosine(1519) in 16S rRNA + 4 S-adenosyl-L-methionine = N(6)-dimethyladenosine(1518)/N(6)-dimethyladenosine(1519) in 16S rRNA + 4 S-adenosyl-L-homocysteine + 4 H(+). Specifically dimethylates two adjacent adenosines (A1518 and A1519) in the loop of a conserved hairpin near the 3'-end of 16S rRNA in the 30S particle. May play a critical role in biogenesis of 30S subunits. The sequence is that of Ribosomal RNA small subunit methyltransferase A from Shigella boydii serotype 4 (strain Sb227).